The following is a 338-amino-acid chain: Glycerol-3-phosphate dehydrogenase [NAD(P)+] (338 aa).

NADPH is bound by residues Ser13, Trp14, and Lys108. Lys108, Gly139, and Ser141 together coordinate sn-glycerol 3-phosphate. Ala143 serves as a coordination point for NADPH. Residues Lys194, Asp247, Ser257, Arg258, and Asn259 each coordinate sn-glycerol 3-phosphate. Lys194 acts as the Proton acceptor in catalysis. Residue Arg258 participates in NADPH binding. Residues Val282 and Glu284 each contribute to the NADPH site.

Belongs to the NAD-dependent glycerol-3-phosphate dehydrogenase family.

Its subcellular location is the cytoplasm. The catalysed reaction is sn-glycerol 3-phosphate + NAD(+) = dihydroxyacetone phosphate + NADH + H(+). The enzyme catalyses sn-glycerol 3-phosphate + NADP(+) = dihydroxyacetone phosphate + NADPH + H(+). The protein operates within membrane lipid metabolism; glycerophospholipid metabolism. Catalyzes the reduction of the glycolytic intermediate dihydroxyacetone phosphate (DHAP) to sn-glycerol 3-phosphate (G3P), the key precursor for phospholipid synthesis. This chain is Glycerol-3-phosphate dehydrogenase [NAD(P)+], found in Streptococcus pneumoniae (strain Taiwan19F-14).